The sequence spans 546 residues: Probable malate:quinone oxidoreductase (546 aa).

The protein belongs to the MQO family. The cofactor is FAD.

It carries out the reaction (S)-malate + a quinone = a quinol + oxaloacetate. It functions in the pathway carbohydrate metabolism; tricarboxylic acid cycle; oxaloacetate from (S)-malate (quinone route): step 1/1. The chain is Probable malate:quinone oxidoreductase from Acinetobacter baumannii (strain AB0057).